Here is a 165-residue protein sequence, read N- to C-terminus: Ubiquitin-fold modifier-conjugating enzyme 1 (165 aa).

Catalysis depends on cysteine 116, which acts as the Glycyl thioester intermediate.

This sequence belongs to the ubiquitin-conjugating enzyme family. UFC1 subfamily.

In terms of biological role, E2-like enzyme which forms an intermediate with UFM1 via a thioester linkage. This is Ubiquitin-fold modifier-conjugating enzyme 1 from Drosophila virilis (Fruit fly).